The sequence spans 196 residues: UPF0316 protein LBL_2483 (196 aa).

3 consecutive transmembrane segments (helical) span residues 12-32 (YCVL…IGTI), 44-64 (IAAS…TQVI), and 70-90 (ALCY…GMIL).

It belongs to the UPF0316 family.

The protein localises to the cell membrane. This Leptospira borgpetersenii serovar Hardjo-bovis (strain L550) protein is UPF0316 protein LBL_2483.